The following is a 96-amino-acid chain: Small ribosomal subunit protein bS6 (96 aa).

This sequence belongs to the bacterial ribosomal protein bS6 family.

In terms of biological role, binds together with bS18 to 16S ribosomal RNA. This Salinispora tropica (strain ATCC BAA-916 / DSM 44818 / JCM 13857 / NBRC 105044 / CNB-440) protein is Small ribosomal subunit protein bS6.